The primary structure comprises 252 residues: 2-succinyl-6-hydroxy-2,4-cyclohexadiene-1-carboxylate synthase (252 aa).

It belongs to the AB hydrolase superfamily. MenH family. Monomer.

It catalyses the reaction 5-enolpyruvoyl-6-hydroxy-2-succinyl-cyclohex-3-ene-1-carboxylate = (1R,6R)-6-hydroxy-2-succinyl-cyclohexa-2,4-diene-1-carboxylate + pyruvate. It functions in the pathway quinol/quinone metabolism; 1,4-dihydroxy-2-naphthoate biosynthesis; 1,4-dihydroxy-2-naphthoate from chorismate: step 3/7. It participates in quinol/quinone metabolism; menaquinone biosynthesis. In terms of biological role, catalyzes a proton abstraction reaction that results in 2,5-elimination of pyruvate from 2-succinyl-5-enolpyruvyl-6-hydroxy-3-cyclohexene-1-carboxylate (SEPHCHC) and the formation of 2-succinyl-6-hydroxy-2,4-cyclohexadiene-1-carboxylate (SHCHC). The polypeptide is 2-succinyl-6-hydroxy-2,4-cyclohexadiene-1-carboxylate synthase (Escherichia coli (strain ATCC 8739 / DSM 1576 / NBRC 3972 / NCIMB 8545 / WDCM 00012 / Crooks)).